The chain runs to 473 residues: Arginine biosynthesis bifunctional protein ArgJ, mitochondrial (473 aa).

Residues Thr-201, Lys-230, Thr-241, Glu-328, Asn-468, and Thr-473 each coordinate substrate. Thr-241 functions as the Nucleophile in the catalytic mechanism.

Belongs to the ArgJ family. In terms of assembly, heterodimer of an alpha and a beta chain. Post-translationally, the alpha and beta chains are autoproteolytically processed from a single precursor protein within the mitochondrion.

Its subcellular location is the mitochondrion matrix. The enzyme catalyses N(2)-acetyl-L-ornithine + L-glutamate = N-acetyl-L-glutamate + L-ornithine. It catalyses the reaction L-glutamate + acetyl-CoA = N-acetyl-L-glutamate + CoA + H(+). It functions in the pathway amino-acid biosynthesis; L-arginine biosynthesis; L-ornithine and N-acetyl-L-glutamate from L-glutamate and N(2)-acetyl-L-ornithine (cyclic): step 1/1. Its pathway is amino-acid biosynthesis; L-arginine biosynthesis; N(2)-acetyl-L-ornithine from L-glutamate: step 1/4. In terms of biological role, catalyzes two activities which are involved in the cyclic version of arginine biosynthesis: the synthesis of acetylglutamate from glutamate and acetyl-CoA, and of ornithine by transacetylation between acetylornithine and glutamate. This Blastomyces gilchristii (strain SLH14081) (Blastomyces dermatitidis) protein is Arginine biosynthesis bifunctional protein ArgJ, mitochondrial.